A 331-amino-acid polypeptide reads, in one-letter code: Beta-ketoacyl-[acyl-carrier-protein] synthase III (331 aa).

Catalysis depends on residues C113 and H256. The segment at 257–261 (QANKR) is ACP-binding. N286 is an active-site residue.

The protein belongs to the thiolase-like superfamily. FabH family. In terms of assembly, homodimer.

The protein localises to the cytoplasm. It carries out the reaction malonyl-[ACP] + acetyl-CoA + H(+) = 3-oxobutanoyl-[ACP] + CO2 + CoA. It functions in the pathway lipid metabolism; fatty acid biosynthesis. Functionally, catalyzes the condensation reaction of fatty acid synthesis by the addition to an acyl acceptor of two carbons from malonyl-ACP. Catalyzes the first condensation reaction which initiates fatty acid synthesis and may therefore play a role in governing the total rate of fatty acid production. Possesses both acetoacetyl-ACP synthase and acetyl transacylase activities. Its substrate specificity determines the biosynthesis of branched-chain and/or straight-chain of fatty acids. The protein is Beta-ketoacyl-[acyl-carrier-protein] synthase III of Solibacter usitatus (strain Ellin6076).